The chain runs to 487 residues: Homeobox protein homothorax (487 aa).

3 disordered regions span residues 25–49 (YDPHAGHRPPGLQGLPSHHSPHMTH), 210–292 (DTTK…SSLN), and 333–369 (NFGTSASGDASNASIGSGEGTGEEDDDASGKKNQKKR). An MEIS N-terminal domain is found at 127 to 211 (GGDVCSSESF…IDLVIDERDT (85 aa)). Composition is skewed to polar residues over residues 227–237 (NADSTSHTDGA) and 333–345 (NFGTSASGDASNA). A DNA-binding region (homeobox; TALE-type) is located at residues 365–427 (NQKKRGIFPK…NARRRIVQPM (63 aa)).

The protein belongs to the TALE/MEIS homeobox family. Interacts with exd; required for nuclear translocation of exd. In the wing disk, the expression is present in the regions corresponding to notum, wing hinge and ventral pleura. In the leg disk, the expression is in the periphery region, corresponding to the proximal segments of the legs. In the antennal disk, the expression is in all but the arista region. In the eye disk, the expression is strong in the anterior region surrounding the eye field, including the regions corresponding to ptilinum, ocellus and head capsules, and weak in the posterior and lateral margins of the eye disk. Expressed specifically in maturating inner photoreceptors of the DRA and maintained through adulthood.

The protein localises to the nucleus. All isoforms are required for patterning of the embryonic cuticle. Acts with exd to delimit the eye field and prevent inappropriate eye development. Isoforms that carry the homeodomain are required for proper localization of chordotonal organs within the peripheral nervous system and antennal identity; required to activate antennal-specific genes, such as sal and to repress the leg-like expression of dac. Necessary for the nuclear localization of the essential HOX cofactor, extradenticle (exd). Both necessary and sufficient for inner photoreceptors to adopt the polarization-sensitive 'dorsal rim area' (DRA) of the eye fate instead of the color-sensitive default state. This occurs by increasing rhabdomere size and uncoupling R7-R8 communication to allow both cells to express the same opsin rather than different ones as required for color vision. The protein is Homeobox protein homothorax of Drosophila melanogaster (Fruit fly).